The following is a 72-amino-acid chain: uncharacterized protein (72 aa).

Residues 46 to 66 (AIFVFNLCFIPNLCVACIFNV) traverse the membrane as a helical segment.

It is found in the membrane. This is an uncharacterized protein from Saccharomyces cerevisiae (strain ATCC 204508 / S288c) (Baker's yeast).